The following is a 98-amino-acid chain: Cystatin-A (98 aa).

N-acetylmethionine is present on Met-1. The Secondary area of contact signature appears at 46–50; sequence QVVAG.

The protein belongs to the cystatin family.

It is found in the cytoplasm. Functionally, this is an intracellular thiol proteinase inhibitor. This Felis catus (Cat) protein is Cystatin-A (CSTA).